A 443-amino-acid chain; its full sequence is 23S rRNA (uracil(1939)-C(5))-methyltransferase RlmD (443 aa).

One can recognise a TRAM domain in the interval Q4 to E66. Residues C79, C85, C88, and C167 each coordinate [4Fe-4S] cluster. S-adenosyl-L-methionine-binding residues include Q275, F304, N309, E325, D352, and D373. The active-site Nucleophile is the C399.

Belongs to the class I-like SAM-binding methyltransferase superfamily. RNA M5U methyltransferase family. RlmD subfamily.

It catalyses the reaction uridine(1939) in 23S rRNA + S-adenosyl-L-methionine = 5-methyluridine(1939) in 23S rRNA + S-adenosyl-L-homocysteine + H(+). In terms of biological role, catalyzes the formation of 5-methyl-uridine at position 1939 (m5U1939) in 23S rRNA. This chain is 23S rRNA (uracil(1939)-C(5))-methyltransferase RlmD, found in Xylella fastidiosa (strain 9a5c).